The sequence spans 426 residues: Glutamate-1-semialdehyde 2,1-aminomutase (426 aa).

At Lys265 the chain carries N6-(pyridoxal phosphate)lysine.

The protein belongs to the class-III pyridoxal-phosphate-dependent aminotransferase family. HemL subfamily. As to quaternary structure, homodimer. Pyridoxal 5'-phosphate serves as cofactor.

The protein localises to the cytoplasm. It carries out the reaction (S)-4-amino-5-oxopentanoate = 5-aminolevulinate. It functions in the pathway porphyrin-containing compound metabolism; protoporphyrin-IX biosynthesis; 5-aminolevulinate from L-glutamyl-tRNA(Glu): step 2/2. This Salmonella choleraesuis (strain SC-B67) protein is Glutamate-1-semialdehyde 2,1-aminomutase.